A 167-amino-acid polypeptide reads, in one-letter code: Signal peptidase complex catalytic subunit SEC11 (167 aa).

Topologically, residues 1–12 are cytoplasmic; sequence MNIRHQLVQFLN. Residues 13-30 form a helical; Signal-anchor for type II membrane protein membrane-spanning segment; sequence LALVLSSAFMAWKTLSVI. Topologically, residues 31–167 are lumenal; sequence TNSHSPIVVV…MGISSLLSNE (137 aa). Catalysis depends on charge relay system residues Ser44, His83, and Asp109. The C-terminal short (CTS) helix stretch occupies residues 153–164; that stretch reads TLLGLMGISSLL.

The protein belongs to the peptidase S26B family. As to quaternary structure, component of the signal peptidase complex (SPC) composed of a catalytic subunit SEC11 and three accessory subunits SPC1, SPC2 and SPC3. The complex induces a local thinning of the ER membrane which is used to measure the length of the signal peptide (SP) h-region of protein substrates. This ensures the selectivity of the complex towards h-regions shorter than 18-20 amino acids. SPC associates with the translocon complex.

It localises to the endoplasmic reticulum membrane. It carries out the reaction Cleavage of hydrophobic, N-terminal signal or leader sequences from secreted and periplasmic proteins.. Its function is as follows. Catalytic component of the signal peptidase complex (SPC) which catalyzes the cleavage of N-terminal signal sequences from nascent proteins as they are translocated into the lumen of the endoplasmic reticulum. Specifically cleaves N-terminal signal peptides that contain a hydrophobic alpha-helix (h-region) shorter than 18-20 amino acids. The protein is Signal peptidase complex catalytic subunit SEC11 (SEC11) of Debaryomyces hansenii (strain ATCC 36239 / CBS 767 / BCRC 21394 / JCM 1990 / NBRC 0083 / IGC 2968) (Yeast).